Here is a 97-residue protein sequence, read N- to C-terminus: MALSLFTVGQLIFLFWTLRITEANPDPAAKAAPAAVADPAAAAAAAVADTASDAAAAAAATAAAAAKAAADTAAAAAKAAADTAAAAAEAAAATARG.

The N-terminal stretch at 1–23 (MALSLFTVGQLIFLFWTLRITEA) is a signal peptide. Residues 24–48 (NPDPAAKAAPAAVADPAAAAAAAVA) constitute a propeptide, removed by a dipeptidylpeptidase.

The protein belongs to the type-I AFP family. In terms of tissue distribution, detected in blood serum (at protein level).

It localises to the secreted. Its function is as follows. Contributes to protect fish blood from freezing at subzero sea water temperatures. Lowers the blood freezing point. Binds to nascent ice crystals and prevents further growth. In Myzopsetta ferruginea (Yellowtail flounder), this protein is Ice-structuring protein.